A 269-amino-acid polypeptide reads, in one-letter code: Thiazole synthase (269 aa).

Catalysis depends on Lys-105, which acts as the Schiff-base intermediate with DXP. 1-deoxy-D-xylulose 5-phosphate is bound by residues Gly-166, 192 to 193, and 214 to 215; these read AG and NT. A disordered region spans residues 245–269; the sequence is AMSAQDAAQPSTPVLGTPFWHHDHG.

The protein belongs to the ThiG family. Homotetramer. Forms heterodimers with either ThiH or ThiS.

The protein resides in the cytoplasm. The enzyme catalyses [ThiS sulfur-carrier protein]-C-terminal-Gly-aminoethanethioate + 2-iminoacetate + 1-deoxy-D-xylulose 5-phosphate = [ThiS sulfur-carrier protein]-C-terminal Gly-Gly + 2-[(2R,5Z)-2-carboxy-4-methylthiazol-5(2H)-ylidene]ethyl phosphate + 2 H2O + H(+). The protein operates within cofactor biosynthesis; thiamine diphosphate biosynthesis. Its function is as follows. Catalyzes the rearrangement of 1-deoxy-D-xylulose 5-phosphate (DXP) to produce the thiazole phosphate moiety of thiamine. Sulfur is provided by the thiocarboxylate moiety of the carrier protein ThiS. In vitro, sulfur can be provided by H(2)S. This Paracidovorax citrulli (strain AAC00-1) (Acidovorax citrulli) protein is Thiazole synthase.